Consider the following 576-residue polypeptide: MNIQLFLSDRIRHALIMAGAPDDSDAQLHPSTKAQFGDYQANGVMSAAKKQRIPPRELAERVLEHLDLSDIAKKVEIAGPGFINIFLNEQWISQKIESVFIGPKLGLTPVTPQRIVIDYSAPNVAKEMHVGHLRSTIIGDAMARTLSFLGHHVIRANHIGDWGTQFGMLIAYLEKIQHDHALEMVLSDLEHFYREAKKHYDEDEIFAQRARDYVVKLQSGDPYCREMWRKLVDITMTQNHLSYERLKVTLTPEDMMGESLYNDMLPNIVEDLIAKGVAVKDQGSVLVFLEEYQNKIGEPMGVVIQKKDGGYLYATTDIACVKYRCETLKADRILYYIDSRQNQHLAQVWTITRLAGYVPESVSLEHHMFGMMLGKDGKPFKTRTGGTVKLSDLLDEAVERAGQLIRGKNPDLNETDLNNLIQAVAIGAVKYADLSKNRTTDYIFDWDRMLSFEGNTAPYIQYAYSRVTSLFKKSGLDEKKIMSPVIIQEEKERSLAILLLQFEEMISTVARDGTPHLMCSYLYDLATRFSIFYEHCPILNAKNEQIRQSRLKLAWLTAKTLKLGLKNLGIETVERM.

Residues 122 to 132 (PNVAKEMHVGH) carry the 'HIGH' region motif.

Belongs to the class-I aminoacyl-tRNA synthetase family. In terms of assembly, monomer.

It localises to the cytoplasm. It carries out the reaction tRNA(Arg) + L-arginine + ATP = L-arginyl-tRNA(Arg) + AMP + diphosphate. The chain is Arginine--tRNA ligase from Hamiltonella defensa subsp. Acyrthosiphon pisum (strain 5AT).